The chain runs to 70 residues: uncharacterized protein (70 aa).

Residues 50 to 70 form a helical membrane-spanning segment; it reads INVVLVLIIALIIFILMLDGV.

It localises to the membrane. This is an uncharacterized protein from Dictyostelium discoideum (Social amoeba).